The primary structure comprises 122 residues: Large ribosomal subunit protein uL14 (122 aa).

It belongs to the universal ribosomal protein uL14 family. As to quaternary structure, part of the 50S ribosomal subunit. Forms a cluster with proteins L3 and L19. In the 70S ribosome, L14 and L19 interact and together make contacts with the 16S rRNA in bridges B5 and B8.

Its function is as follows. Binds to 23S rRNA. Forms part of two intersubunit bridges in the 70S ribosome. The sequence is that of Large ribosomal subunit protein uL14 from Bradyrhizobium sp. (strain BTAi1 / ATCC BAA-1182).